The sequence spans 189 residues: MSPKSSGILKGHFLMAIPGLPDPNFAQTVTCICEHNKTGALGFIINRIHPLLTGQELFEDLKITCNQAIDKIAIHLGGPVQPSGVFVLHGPPFDWHGCLKINDWLGLSNTRDILEAVARQEGPENFIVLLGCAGWGPLQLDNEINDNAWLTIPVSQEILFKTDVKLKWEMTMMQMGIVSDNHSDNSGKA.

The protein belongs to the UPF0301 (AlgH) family.

This Desulforapulum autotrophicum (strain ATCC 43914 / DSM 3382 / VKM B-1955 / HRM2) (Desulfobacterium autotrophicum) protein is UPF0301 protein HRM2_24640.